The sequence spans 28 residues: Phospholipase A2 pseudexin C chain (28 aa).

Residue Y28 coordinates Ca(2+).

The protein belongs to the phospholipase A2 family. Group I subfamily. It depends on Ca(2+) as a cofactor. As to expression, expressed by the venom gland.

The protein localises to the secreted. The catalysed reaction is a 1,2-diacyl-sn-glycero-3-phosphocholine + H2O = a 1-acyl-sn-glycero-3-phosphocholine + a fatty acid + H(+). Functionally, PLA2 catalyzes the calcium-dependent hydrolysis of the 2-acyl groups in 3-sn-phosphoglycerides. The sequence is that of Phospholipase A2 pseudexin C chain from Pseudechis porphyriacus (Red-bellied black snake).